We begin with the raw amino-acid sequence, 50 residues long: MDAAHLSDLDIDALEISEFLDESRLEDSEVVAKVMSASCTTCECCCSCSS.

A cross-link (thiazole-4-carboxylic acid (Ser-Cys)) is located at residues 38 to 39 (SC). A cross-link (3-hydroxypyridine-2,5-dicarboxylic acid (Ser-Cys) (with S-47)) is located at residues 38 to 46 (SCTTCECCC). The 3-hydroxypyridine-2,5-dicarboxylic acid (Ser-Ser) (with C-46) cross-link spans 38-47 (SCTTCECCCS). The thiazole-4-carboxylic acid (Thr-Cys) cross-link spans 41–42 (TC). Glu-43 is subject to 4-hydroxyglutamate. A cross-link (thiazole-4-carboxylic acid (Glu-Cys)) is located at residues 43–44 (EC). A cross-link (2-(cystein-S-ylcarbonyl)-3-methyl-4-(glutam-5-yloxy)methylindole (Glu-Cys)) is located at residues 43–45 (ECC). The segment at residues 45-46 (CC) is a cross-link (thiazole-4-carboxylic acid (Cys-Cys)). The thiazole-4-carboxylic acid (Ser-Cys) cross-link spans 47 to 48 (SC). Ser-49 carries the post-translational modification 2,3-didehydroalanine (Ser). Ser-49 bears the Serine amide; atypical mark.

Belongs to the thiocillin family. Post-translationally, the amidation of Ser-49 is produced by the oxidative cleavage of Ser-50 rather than of a glycine, as in eukaryotes.

Its function is as follows. Inhibits bacterial protein biosynthesis by binding to ribosomes. Specifically, binds to the complex of 23S rRNA and ribosomal protein L11 (RPLK) in the 50S ribosomal subunit. While allowing a weak binding of elongation factor G (EF-G) to the ribosome and subsequent GTP-hydrolysis, probably impairs conformational changes in both the ribosome and EF-G which are necessary for translocation. In vitro, inhibits Gram-positive bacteria S.aureus strain 209P (MIC=0.0009 ug/ml), S.aureus strain 133 (MIC=0.0019 ug/ml), S.aureus strain B3 (MIC=0.003 ug/ml), S.aureus strain Hb (MIC=0.003 ug/ml), M.citreus strain ATCC 8411 (MIC=0.0038 ug/ml), M.lysodeikticus strain ATCC 4698 (MIC=0.003 ug/ml), S.lutea strain ATCC 9341 (MIC=0.0011 ug/ml), S.faecalis strain ATCC 9790 (MIC=0.0007 ug/ml), S.viridans (MIC=0.0065 ug/ml), S.pyogenes hemolyticus strain Dig7 (MIC=0.00028 ug/ml), D.pneumoniae strain Til (MIC=0.00015 ug/ml), N.catrrhalis (MIC=0.0017 ug/ml), L.casei strain ATCC 6633 (MIC=0.003 ug/ml), B.cereus strain ATCC 6630 (MIC=0.0071 ug/ml) and various isolates of L.monocytogenes. In vitro, inhibits Gram-negative bacterium P.multocida strain A125 (MIC=0.0024 ug/ml) but not M.smegmatis strain ATCC 6630, S.typhimurium, A.aerogenes strain ATCC 8308, P.vulgaris, K.pneumoniae strain ATCC 10031, S.marcescens strain A476, P.aeruginosa strain Bass or B.bronchiseptica strain CN387. Does not inhibit Gram-negative bacterium E.coli strain ATCC 9637 but does inhibit purified ribosomes from E.coli. In vivo, has no systemic effect in mice infected with staphylococci or streptococci when applied orally or subcutaneously. Has a local effect in mice infected subcutaneously or intraperitoneally with staphylococci when applied immediately afterwards. Is not toxic to mice. In Streptomyces actuosus, this protein is Nosiheptide precursor.